A 290-amino-acid polypeptide reads, in one-letter code: Pirin (290 aa).

Histidine 56, histidine 58, histidine 101, and glutamate 103 together coordinate Fe cation.

Belongs to the pirin family. May interact with NF1/CTF1. Interacts with BCL3. Identified in a complex comprised of PIR, BLC3, NFKB1 and target DNA. It depends on Fe cation as a cofactor. As to expression, highly expressed in a subset of melanomas. Detected at very low levels in most tissues (at protein level). Expressed in all tissues, with highest level of expression in heart and liver.

Its subcellular location is the nucleus. The protein localises to the cytoplasm. The enzyme catalyses quercetin + O2 = 2-(3,4-dihydroxybenzoyloxy)-4,6-dihydroxybenzoate + CO. It functions in the pathway flavonoid metabolism; quercetin degradation. Inhibited by kojic acid, sodium diethyldithiocarbamate and 1,10-phenanthroline monohydrochloride. Functionally, transcriptional coregulator of NF-kappa-B which facilitates binding of NF-kappa-B proteins to target kappa-B genes in a redox-state-dependent manner. May be required for efficient terminal myeloid maturation of hematopoietic cells. Has quercetin 2,3-dioxygenase activity (in vitro). The polypeptide is Pirin (PIR) (Homo sapiens (Human)).